Here is a 461-residue protein sequence, read N- to C-terminus: Kynurenine 3-monooxygenase (461 aa).

2 helical membrane-spanning segments follow: residues 395–415 and 432–452; these read TIMNSIFPKSWIPLYSMVTFS and ILSRIMTTTSTLALIGAAAGI.

This sequence belongs to the aromatic-ring hydroxylase family. KMO subfamily. FAD is required as a cofactor.

The protein localises to the mitochondrion. It localises to the membrane. It catalyses the reaction L-kynurenine + NADPH + O2 + H(+) = 3-hydroxy-L-kynurenine + NADP(+) + H2O. It functions in the pathway cofactor biosynthesis; NAD(+) biosynthesis; quinolinate from L-kynurenine: step 1/3. Its function is as follows. Catalyzes the hydroxylation of L-kynurenine (L-Kyn) to form 3-hydroxy-L-kynurenine (L-3OHKyn). Required for synthesis of quinolinic acid. The chain is Kynurenine 3-monooxygenase from Caenorhabditis elegans.